Here is a 134-residue protein sequence, read N- to C-terminus: Small ribosomal subunit protein bS6 (134 aa).

The segment at 100-134 is disordered; the sequence is SFLARDETDRRERSEETAEGEGEPDHSANEAVVTA. Residues 103–115 show a composition bias toward basic and acidic residues; that stretch reads ARDETDRRERSEE.

The protein belongs to the bacterial ribosomal protein bS6 family.

Functionally, binds together with bS18 to 16S ribosomal RNA. The protein is Small ribosomal subunit protein bS6 of Acidithiobacillus ferrooxidans (strain ATCC 23270 / DSM 14882 / CIP 104768 / NCIMB 8455) (Ferrobacillus ferrooxidans (strain ATCC 23270)).